Reading from the N-terminus, the 100-residue chain is Urease subunit gamma (100 aa).

Belongs to the urease gamma subunit family. As to quaternary structure, heterotrimer of UreA (gamma), UreB (beta) and UreC (alpha) subunits. Three heterotrimers associate to form the active enzyme.

Its subcellular location is the cytoplasm. The enzyme catalyses urea + 2 H2O + H(+) = hydrogencarbonate + 2 NH4(+). It functions in the pathway nitrogen metabolism; urea degradation; CO(2) and NH(3) from urea (urease route): step 1/1. This Cupriavidus necator (strain ATCC 17699 / DSM 428 / KCTC 22496 / NCIMB 10442 / H16 / Stanier 337) (Ralstonia eutropha) protein is Urease subunit gamma.